The sequence spans 147 residues: Hemoglobin subunit beta (147 aa).

N-acetylvaline is present on Val-2. Positions 3–147 (HLTGEEKAAV…VANALAHKYH (145 aa)) constitute a Globin domain. Thr-13 bears the Phosphothreonine mark. Residue Ser-45 is modified to Phosphoserine. Residue Lys-60 is modified to N6-acetyllysine. His-64 is a binding site for heme b. Residue Lys-83 is modified to N6-acetyllysine. Residue His-93 participates in heme b binding. Cys-94 carries the S-nitrosocysteine modification. The residue at position 145 (Lys-145) is an N6-acetyllysine.

It belongs to the globin family. Heterotetramer of two alpha chains and two beta chains. As to expression, red blood cells.

Involved in oxygen transport from the lung to the various peripheral tissues. This chain is Hemoglobin subunit beta (HBB), found in Cheracebus torquatus (Collared titi monkey).